The sequence spans 207 residues: Octanoyltransferase (207 aa).

Positions 27 to 203 (ASTEDELWVV…HLETQFTPKA (177 aa)) constitute a BPL/LPL catalytic domain. Substrate is bound by residues 66 to 73 (RGGQITYH), 133 to 135 (SLG), and 146 to 148 (GLA). Residue C164 is the Acyl-thioester intermediate of the active site.

This sequence belongs to the LipB family.

It is found in the cytoplasm. The enzyme catalyses octanoyl-[ACP] + L-lysyl-[protein] = N(6)-octanoyl-L-lysyl-[protein] + holo-[ACP] + H(+). It functions in the pathway protein modification; protein lipoylation via endogenous pathway; protein N(6)-(lipoyl)lysine from octanoyl-[acyl-carrier-protein]: step 1/2. In terms of biological role, catalyzes the transfer of endogenously produced octanoic acid from octanoyl-acyl-carrier-protein onto the lipoyl domains of lipoate-dependent enzymes. Lipoyl-ACP can also act as a substrate although octanoyl-ACP is likely to be the physiological substrate. This Neisseria meningitidis serogroup C / serotype 2a (strain ATCC 700532 / DSM 15464 / FAM18) protein is Octanoyltransferase.